A 413-amino-acid chain; its full sequence is Histidine--tRNA ligase (413 aa).

It belongs to the class-II aminoacyl-tRNA synthetase family. Homodimer.

It localises to the cytoplasm. The catalysed reaction is tRNA(His) + L-histidine + ATP = L-histidyl-tRNA(His) + AMP + diphosphate + H(+). This chain is Histidine--tRNA ligase (hisS), found in Rickettsia prowazekii (strain Madrid E).